Consider the following 892-residue polypeptide: Translation initiation factor IF-2 (892 aa).

Positions 138 to 185 (QRNLAEQQRLAEVDRQRVEEQERKRREEEQAELERQKTESRVVEEILV) are enriched in basic and acidic residues. 2 disordered regions span residues 138–250 (QRNL…EDDS) and 262–298 (AAER…SGAH). Residues 207 to 219 (LPRTVRPTPAARP) show a composition bias toward low complexity. The tr-type G domain occupies 391-560 (PRPPVVTIMG…SIQAEVLELK (170 aa)). GTP contacts are provided by residues 400 to 407 (GHVDHGKT), 446 to 450 (DTPGH), and 500 to 503 (SKID).

This sequence belongs to the TRAFAC class translation factor GTPase superfamily. Classic translation factor GTPase family. IF-2 subfamily.

Its subcellular location is the cytoplasm. One of the essential components for the initiation of protein synthesis. Protects formylmethionyl-tRNA from spontaneous hydrolysis and promotes its binding to the 30S ribosomal subunits. Also involved in the hydrolysis of GTP during the formation of the 70S ribosomal complex. The protein is Translation initiation factor IF-2 of Xylella fastidiosa (strain Temecula1 / ATCC 700964).